A 1444-amino-acid chain; its full sequence is Protein shortage in chiasmata 1 ortholog (1444 aa).

Over residues 1106–1117 (SITKSPQISSPQ) the composition is skewed to low complexity. Residues 1106-1129 (SITKSPQISSPQENRNQISTLSSQ) form a disordered region.

Belongs to the XPF family. Highly divergent. As to quaternary structure, interacts with TEX11. Interacts with SPO16.

It localises to the chromosome. In terms of biological role, ATPase required during meiosis for the formation of crossover recombination intermediates. Binds DNA: preferentially binds to single-stranded DNA and DNA branched structures. Does not show nuclease activity in vitro, but shows ATPase activity, which is stimulated by the presence of single-stranded DNA. Plays a key role in homologous recombination and crossing-over in meiotic prophase I in male and female germ cells. Required for proper synaptonemal complex assembly and homologous chromosome pairing. Requiref for recruitment TEX11 and MSH4 to recombination intermediates. The sequence is that of Protein shortage in chiasmata 1 ortholog from Homo sapiens (Human).